A 129-amino-acid chain; its full sequence is Small ribosomal subunit protein uS11 (129 aa).

The interval 107-129 (IEDVTPVPHDSIRGKGGRRGRRV) is disordered.

Belongs to the universal ribosomal protein uS11 family. As to quaternary structure, part of the 30S ribosomal subunit.

Its function is as follows. Located on the platform of the 30S subunit. This is Small ribosomal subunit protein uS11 from Methanoculleus marisnigri (strain ATCC 35101 / DSM 1498 / JR1).